The sequence spans 428 residues: Immunoglobulin superfamily member 11 (428 aa).

An N-terminal signal peptide occupies residues 1-22; that stretch reads MTRRRSAPASWLLVSLLGVATS. The Ig-like V-type domain maps to 23–136; that stretch reads LEVSESPGSV…DRGGRNIGVT (114 aa). Residues 23–240 lie on the Extracellular side of the membrane; sequence LEVSESPGSV…QVISPQPRSV (218 aa). Intrachain disulfides connect cysteine 44/cysteine 120 and cysteine 165/cysteine 215. Asparagine 102 carries an N-linked (GlcNAc...) asparagine glycan. The Ig-like C2-type domain occupies 144-234; it reads PSAPQCQIQG…TCLLDLQVIS (91 aa). Residues 241–261 traverse the membrane as a helical segment; it reads GVIAGAVGTGAVLIVICLALI. The Cytoplasmic segment spans residues 262-428; sequence SGAFFYWRSK…PAQSRAGSLV (167 aa). Omega-N-methylarginine is present on arginine 375. Over residues 376–389 the composition is skewed to polar residues; the sequence is GSSPQVLPRNNGSV. Positions 376-396 are disordered; that stretch reads GSSPQVLPRNNGSVSRKPWPQ.

In terms of processing, N-glycosylated. Highly expressed in testis and detected in kidney and adrenal gland. In brain, expressed in commissure fibers of the corpus callosum and pyramidal cell layers of the dentate gyrus and hippocampus where it is probably expressed by both neurons and glial cells.

The protein localises to the cell membrane. Its function is as follows. Functions as a cell adhesion molecule through homophilic interaction. Stimulates cell growth. This chain is Immunoglobulin superfamily member 11 (Igsf11), found in Mus musculus (Mouse).